Reading from the N-terminus, the 1196-residue chain is Chromosome partition protein Smc (1196 aa).

32 to 39 (PNGSGKSN) is an ATP binding site. Coiled coils occupy residues 168-288 (LKHR…SVQQ) and 327-497 (DALE…LERK). In terms of domain architecture, SMC hinge spans 510–621 (AGILGPMAKL…VDDLDRALAL (112 aa)). Coiled coils occupy residues 654–829 (LEVT…RAQQ) and 972–1026 (DRPT…KDLL).

Belongs to the SMC family. As to quaternary structure, homodimer.

The protein localises to the cytoplasm. Required for chromosome condensation and partitioning. In Mycolicibacterium paratuberculosis (strain ATCC BAA-968 / K-10) (Mycobacterium paratuberculosis), this protein is Chromosome partition protein Smc.